The following is a 579-amino-acid chain: Fatty-acid amide hydrolase 1 (579 aa).

The chain crosses the membrane as a helical span at residues 9-29 (TLSGVSGVCLACSLLSAAVVL). The Cytoplasmic portion of the chain corresponds to 30–403 (RWTGRQKARG…GDFVDPCLGD (374 aa)). The active-site Charge relay system is Lys-142. Residues Met-191, Ser-217, and 238 to 241 (IGGS) contribute to the substrate site. Ser-217 acts as the Charge relay system in catalysis. Ser-241 serves as the catalytic Acyl-ester intermediate. Position 241 is a phosphoserine (Ser-241). Residues 404-433 (LILILRLPSWFKRLLSLLLKPLFPRLAAFL) lie within the membrane without spanning it. Residues 434–579 (NSMRPRSAEK…QLMTPQKQPS (146 aa)) are Cytoplasmic-facing.

It belongs to the amidase family. As to quaternary structure, homodimer. As to expression, found in neuronal cells throughout the CNS. Expressed in liver and brain, and to a lesser extent in spleen, lung, kidney and testes.

The protein localises to the endoplasmic reticulum membrane. It localises to the golgi apparatus membrane. The catalysed reaction is N-(5Z,8Z,11Z,14Z-eicosatetraenoyl)-ethanolamine + H2O = ethanolamine + (5Z,8Z,11Z,14Z)-eicosatetraenoate. The enzyme catalyses (9Z)-octadecenamide + H2O = (9Z)-octadecenoate + NH4(+). It carries out the reaction 2-(5Z,8Z,11Z,14Z-eicosatetraenoyl)-glycerol + H2O = glycerol + (5Z,8Z,11Z,14Z)-eicosatetraenoate + H(+). It catalyses the reaction (9Z,12Z,15Z)-octadecatrienamide + H2O = (9Z,12Z,15Z)-octadecatrienoate + NH4(+). The catalysed reaction is (5Z,8Z,11Z,14Z)-eicosatetraenamide + H2O = (5Z,8Z,11Z,14Z)-eicosatetraenoate + NH4(+). The enzyme catalyses (6Z)-octadecenamide + H2O = (6Z)-octadecenoate + NH4(+). It carries out the reaction (15Z)-tetracosenamide + H2O = (15Z)-tetracosenoate + NH4(+). It catalyses the reaction (8Z,11Z,14Z)-eicosatrienamide + H2O = (8Z,11Z,14Z)-eicosatrienoate + NH4(+). The catalysed reaction is (11Z,14Z,17Z)-eicosatrienamide + H2O = (11Z,14Z,17Z)-eicosatrienoate + NH4(+). The enzyme catalyses (11Z,14Z)-eicosadienamide + H2O = (11Z,14Z)-eicosadienoate + NH4(+). It carries out the reaction (9Z,12Z)-octadecadienamide + H2O = (9Z,12Z)-octadecadienoate + NH4(+). It catalyses the reaction tetradecamide + H2O = tetradecanoate + NH4(+). The catalysed reaction is N-(9Z-octadecenoyl) ethanolamine + H2O = ethanolamine + (9Z)-octadecenoate. The enzyme catalyses N-(9Z-octadecenoyl)-taurine + H2O = taurine + (9Z)-octadecenoate. It carries out the reaction 1-O-methyl-(5Z,8Z,11Z,14Z)-eicosatetraenoate + H2O = methanol + (5Z,8Z,11Z,14Z)-eicosatetraenoate + H(+). It catalyses the reaction (11Z)-eicosenamide + H2O = (11Z)-eicosenoate + NH4(+). The catalysed reaction is N-(9Z-hexadecenoyl) ethanolamine + H2O = (9Z)-hexadecenoate + ethanolamine. The enzyme catalyses N-octadecanoyl ethanolamine + H2O = octadecanoate + ethanolamine. It carries out the reaction N-docosanoyl-ethanolamine + H2O = docosanoate + ethanolamine. It catalyses the reaction N-tetracosanoyl-taurine + H2O = tetracosanoate + taurine. The catalysed reaction is N-(15Z-tetracosenoyl)-ethanolamine + H2O = (15Z)-tetracosenoate + ethanolamine. The enzyme catalyses N-docosanoyl-taurine + H2O = docosanoate + taurine. It carries out the reaction N-(15Z-tetracosenoyl)-taurine + H2O = (15Z)-tetracosenoate + taurine. It catalyses the reaction N-tricosanoyl-taurine + H2O = tricosanoate + taurine. The catalysed reaction is (9Z)-octadecenoate + glycine = N-(9Z-octadecenoyl)glycine + H2O. The enzyme catalyses N-(5Z,8Z,11Z,14Z)-eicosatetraenoyl-glycine + H2O = (5Z,8Z,11Z,14Z)-eicosatetraenoate + glycine. It carries out the reaction N-(5Z,8Z,11Z,14Z-eicosatetraenoyl)-L-serine + H2O = (5Z,8Z,11Z,14Z)-eicosatetraenoate + L-serine. Its activity is regulated as follows. inhibited by trifluoromethyl ketone. Its function is as follows. Catalyzes the hydrolysis of endogenous amidated lipids like the sleep-inducing lipid oleamide ((9Z)-octadecenamide), the endocannabinoid anandamide (N-(5Z,8Z,11Z,14Z-eicosatetraenoyl)-ethanolamine), as well as other fatty amides, to their corresponding fatty acids, thereby regulating the signaling functions of these molecules. Hydrolyzes polyunsaturated substrate anandamide preferentially as compared to monounsaturated substrates. It can also catalyze the hydrolysis of the endocannabinoid 2-arachidonoylglycerol (2-(5Z,8Z,11Z,14Z-eicosatetraenoyl)-glycerol). FAAH cooperates with PM20D1 in the hydrolysis of amino acid-conjugated fatty acids such as N-fatty acyl glycine and N-fatty acyl-L-serine, thereby acting as a physiological regulator of specific subsets of intracellular, but not of extracellular, N-fatty acyl amino acids. This is Fatty-acid amide hydrolase 1 (Faah) from Rattus norvegicus (Rat).